The following is a 298-amino-acid chain: N-acetylmuramic acid 6-phosphate etherase (298 aa).

In terms of domain architecture, SIS spans 55 to 218; that stretch reads IHAQVSGGGR…STGLMIKSGK (164 aa). The active-site Proton donor is E83. Residue E114 is part of the active site.

Belongs to the GCKR-like family. MurNAc-6-P etherase subfamily. Homodimer.

It catalyses the reaction N-acetyl-D-muramate 6-phosphate + H2O = N-acetyl-D-glucosamine 6-phosphate + (R)-lactate. It participates in amino-sugar metabolism; 1,6-anhydro-N-acetylmuramate degradation. Its pathway is amino-sugar metabolism; N-acetylmuramate degradation. The protein operates within cell wall biogenesis; peptidoglycan recycling. Specifically catalyzes the cleavage of the D-lactyl ether substituent of MurNAc 6-phosphate, producing GlcNAc 6-phosphate and D-lactate. Together with AnmK, is also required for the utilization of anhydro-N-acetylmuramic acid (anhMurNAc) either imported from the medium or derived from its own cell wall murein, and thus plays a role in cell wall recycling. The chain is N-acetylmuramic acid 6-phosphate etherase from Escherichia coli O81 (strain ED1a).